Here is a 632-residue protein sequence, read N- to C-terminus: Extracellular metalloproteinase 2 (632 aa).

An N-terminal signal peptide occupies residues 1–19; it reads MHGLLLAGLAAALPLGVAG. Residues 20–244 constitute a propeptide that is removed on maturation; that stretch reads LPARQQSGLS…VHNVVDYVAS (225 aa). Asn270 is a glycosylation site (N-linked (GlcNAc...) asparagine). His429 provides a ligand contact to Zn(2+). Glu430 is an active-site residue. Residue His433 coordinates Zn(2+).

It belongs to the peptidase M36 family. It depends on Zn(2+) as a cofactor.

The protein resides in the secreted. In terms of biological role, secreted metalloproteinase probably acting as a virulence factor. This Arthroderma benhamiae (Trichophyton mentagrophytes) protein is Extracellular metalloproteinase 2 (MEP2).